We begin with the raw amino-acid sequence, 431 residues long: Urokinase-type plasminogen activator (431 aa).

A signal peptide spans 1 to 20; that stretch reads MRALLARLLLCVLVVSDSKG. Positions 27-63 constitute an EGF-like domain; it reads VPSNCDCLNGGTCVSNKYFSNIHWCNCPKKFGGQHCE. Intrachain disulfides connect Cys-31–Cys-39, Cys-33–Cys-51, Cys-53–Cys-62, Cys-70–Cys-151, Cys-91–Cys-133, and Cys-122–Cys-146. The segment at 34–57 is binds urokinase plasminogen activator surface receptor; it reads LNGGTCVSNKYFSNIHWCNCPKKF. Residues 69 to 151 enclose the Kringle domain; that stretch reads TCYEGNGHFY…LVQECMVHDC (83 aa). Positions 152-178 are connecting peptide; it reads ADGKKPSSPPEELKFQCGQKTLRPRFK. Position 158 is a phosphoserine (Ser-158). Intrachain disulfides connect Cys-168–Cys-299, Cys-209–Cys-225, Cys-217–Cys-288, Cys-313–Cys-382, Cys-345–Cys-361, and Cys-372–Cys-400. Residues 179–424 enclose the Peptidase S1 domain; sequence IVGGEFTTIE…FLPWIRSHTK (246 aa). Catalysis depends on charge relay system residues His-224 and Asp-275. An N-linked (GlcNAc...) asparagine glycan is attached at Asn-322. At Ser-323 the chain carries Phosphoserine. The Charge relay system role is filled by Ser-376.

The protein belongs to the peptidase S1 family. Found in high and low molecular mass forms. Each consists of two chains, A and B. The high molecular mass form contains a long chain A which is cleaved to yield a short chain A. Forms heterodimer with SERPINA5. Binds LRP1B; binding is followed by internalization and degradation. Interacts with MRC2. Interacts with PLAUR. In complex with SERPINE1, interacts with PLAUR/uPAR. Interacts with SORL1 and LRP1, either alone or in complex with SERPINE1; these interactions are abolished in the presence of LRPAP1/RAP. The ternary complex composed of PLAUR-PLAU-PAI1 also interacts with SORLA. Post-translationally, phosphorylation of Ser-158 and Ser-323 abolishes proadhesive ability but does not interfere with receptor binding. In terms of processing, produced as an inactive single-chain protein (pro-uPA or sc-uPA), is processed into the active disulfide-linked two-chain form of PLAU/uPA by a proteolytic event mediated, at least, by TMPRSS4.

It is found in the secreted. The enzyme catalyses Specific cleavage of Arg-|-Val bond in plasminogen to form plasmin.. With respect to regulation, inhibited by SERPINA5. Inhibited by SERPINE1. In terms of biological role, specifically cleaves the zymogen plasminogen to form the active enzyme plasmin. The polypeptide is Urokinase-type plasminogen activator (PLAU) (Pongo abelii (Sumatran orangutan)).